The chain runs to 213 residues: Thiopurine S-methyltransferase (213 aa).

Positions 10, 46, 67, and 124 each coordinate S-adenosyl-L-methionine.

The protein belongs to the class I-like SAM-binding methyltransferase superfamily. TPMT family.

Its subcellular location is the cytoplasm. It catalyses the reaction S-adenosyl-L-methionine + a thiopurine = S-adenosyl-L-homocysteine + a thiopurine S-methylether.. This is Thiopurine S-methyltransferase from Xanthobacter autotrophicus (strain ATCC BAA-1158 / Py2).